The following is a 209-amino-acid chain: SAGA-associated factor 11 homolog 1 (209 aa).

The disordered stretch occupies residues 1–36; the sequence is MSRTIVVKNPRTSGKDEDKAQIPSQDELPSGSSGAK. The SGF11-type zinc-finger motif lies at 120-141; it reads CCCPNCERMVAAVRFAPHLQTC. Low complexity predominate over residues 156-166; that stretch reads LTVSSRSSSTS. The segment at 156 to 209 is disordered; that stretch reads LTVSSRSSSTSTGGGQANEKSTDDEDWSLDSRPGKSTKNSRNKGSKKNQKNKLK. Residues 193–209 show a composition bias toward basic residues; that stretch reads KNSRNKGSKKNQKNKLK.

It belongs to the SGF11 family. Component of some SAGA transcription coactivator-HAT complexes, at least composed of Ada2b, not/nonstop, Pcaf/Gcn5, Sgf11 and Spt3. Within the SAGA complex, Sgf11, e(y)2, and not/nonstop form an additional subcomplex of SAGA called the DUB module (deubiquitination module). Interacts directly with not/nonstop. Interacts with the AMEX complex component xmas-2. Interacts with Cbp80; important for promoter recruitment of Sgf11 that is not associated with the DUB module.

It localises to the nucleus. Its subcellular location is the nucleoplasm. It is found in the cytoplasm. Component of the transcription regulatory histone acetylation (HAT) complex SAGA, a multiprotein complex that activates transcription by remodeling chromatin and mediating histone acetylation and deubiquitination. Within the SAGA complex, participates in a subcomplex that specifically deubiquitinates histone H2B. The SAGA complex is recruited to specific gene promoters by activators, where it is required for transcription. Required for nuclear receptor-mediated transactivation. Binds independently on SAGA to promoters in an RNA-dependent manner. Binds to mRNA and is essential for total mRNA export from the nucleus. Required to counteract heterochromatin silencing. Controls the development of neuronal connectivity in visual system by being required for accurate axon targeting in the optic lobe. Required for expression of ecdysone-induced genes such as br/broad. This chain is SAGA-associated factor 11 homolog 1, found in Drosophila willistoni (Fruit fly).